A 290-amino-acid polypeptide reads, in one-letter code: Forkhead box protein O3B (290 aa).

2 disordered regions span residues 1–30 (METDLAEMPEKGVLSSQDSPHFQEKSTEEG) and 44–239 (AAAA…SSRR). Low complexity-rich tracts occupy residues 44-59 (AAAAAAPGSRSLRGVH) and 75-91 (RTPAAAGRAAKMAEAPA). T117 carries the phosphothreonine; by PKB/AKT1 modification. The span at 142–153 (IPEEEDDEDDED) shows a compositional bias: acidic residues. A DNA-binding region (fork-head) is located at residues 242-290 (WGNLSYADLITRAIESSPDRRLTLSQIYEWMVSCVPYFKDKGNSNSSAG).

The protein localises to the cytoplasm. Its subcellular location is the cytosol. Functionally, transcription factor. This is Forkhead box protein O3B from Homo sapiens (Human).